The sequence spans 337 residues: Inositol 2-dehydrogenase (337 aa).

The protein belongs to the Gfo/Idh/MocA family. In terms of assembly, homotetramer.

It carries out the reaction myo-inositol + NAD(+) = scyllo-inosose + NADH + H(+). In terms of biological role, involved in the oxidation of myo-inositol (MI) to 2-keto-myo-inositol (2KMI or 2-inosose). In Arthrobacter sp. (strain FB24), this protein is Inositol 2-dehydrogenase.